The following is a 77-amino-acid chain: Large ribosomal subunit protein bL28 (77 aa).

The disordered stretch occupies residues 1–20 (MSRVCQVTGKGPVTGNNISH).

This sequence belongs to the bacterial ribosomal protein bL28 family.

The sequence is that of Large ribosomal subunit protein bL28 from Pseudomonas fluorescens (strain Pf0-1).